A 178-amino-acid polypeptide reads, in one-letter code: Large ribosomal subunit protein uL6 (178 aa).

This sequence belongs to the universal ribosomal protein uL6 family. As to quaternary structure, part of the 50S ribosomal subunit.

This protein binds to the 23S rRNA, and is important in its secondary structure. It is located near the subunit interface in the base of the L7/L12 stalk, and near the tRNA binding site of the peptidyltransferase center. This is Large ribosomal subunit protein uL6 from Campylobacter fetus subsp. fetus (strain 82-40).